Consider the following 385-residue polypeptide: UPF0744 protein YSC83 (385 aa).

This sequence belongs to the UPF0744 family.

It is found in the mitochondrion outer membrane. This is UPF0744 protein YSC83 (YSC83) from Saccharomyces cerevisiae (strain ATCC 204508 / S288c) (Baker's yeast).